The primary structure comprises 874 residues: Translation initiation factor IF-2 (874 aa).

The segment at 1–289 (MKIKNAQLTK…KHYDEHSVQR (289 aa)) is disordered. The span at 31-48 (SSSEKPTTKVPEKVAKEK) shows a compositional bias: basic and acidic residues. Polar residues predominate over residues 81–104 (RSSFASEDSTIPSPVSVDTESTAF). Positions 105 to 118 (SPPVVEEVVSPLES) are enriched in low complexity. Composition is skewed to basic and acidic residues over residues 144 to 158 (PPKKEAELVVKKEPP) and 186 to 198 (PKKEDKPAPKERT). Residues 199–211 (GTVQTKPQQSSEV) show a composition bias toward polar residues. A compositionally biased stretch (basic and acidic residues) spans 228–260 (YRRDTSKRPGSDFRDRSKKDDSPKAFTGRDRYG). Over residues 271–280 (RKKRVQKTKK) the composition is skewed to basic residues. The tr-type G domain maps to 380–549 (IRPPIVAFMG…ALQAEVLELK (170 aa)). The G1 stretch occupies residues 389-396 (GHVDHGKT). 389–396 (GHVDHGKT) provides a ligand contact to GTP. The segment at 414 to 418 (AITQH) is G2. The interval 435-438 (DTPG) is G3. GTP-binding positions include 435–439 (DTPGH) and 489–492 (NKCD). The interval 489 to 492 (NKCD) is G4. The tract at residues 525-527 (SAK) is G5.

Belongs to the TRAFAC class translation factor GTPase superfamily. Classic translation factor GTPase family. IF-2 subfamily.

The protein resides in the cytoplasm. Its function is as follows. One of the essential components for the initiation of protein synthesis. Protects formylmethionyl-tRNA from spontaneous hydrolysis and promotes its binding to the 30S ribosomal subunits. Also involved in the hydrolysis of GTP during the formation of the 70S ribosomal complex. This chain is Translation initiation factor IF-2, found in Chlamydia abortus (strain DSM 27085 / S26/3) (Chlamydophila abortus).